Consider the following 120-residue polypeptide: Large ribosomal subunit protein uL24 (120 aa).

It belongs to the universal ribosomal protein uL24 family. In terms of assembly, part of the 50S ribosomal subunit.

In terms of biological role, one of two assembly initiator proteins, it binds directly to the 5'-end of the 23S rRNA, where it nucleates assembly of the 50S subunit. Functionally, one of the proteins that surrounds the polypeptide exit tunnel on the outside of the subunit. The chain is Large ribosomal subunit protein uL24 from Pseudarthrobacter chlorophenolicus (strain ATCC 700700 / DSM 12829 / CIP 107037 / JCM 12360 / KCTC 9906 / NCIMB 13794 / A6) (Arthrobacter chlorophenolicus).